A 317-amino-acid polypeptide reads, in one-letter code: MLMIPTIAILSGGFSCEREISLMSGKAVKKALDSLSYNAIEIDVDSNIAEKLKKINPGLAFIALHGPYGEDGCIQGLLEILGIKYTHSGVMASAVAINKVMSKHIFRSLNIDTPKGYVISREDVLKNNIKIDYPYVLKPINEGSSIGVYIIFSHEDYLELKDNSSTIMEKMIVEEYIPGIELHTAVLLDEAIGTIEVRPKNKFYDYEAKYTDGFAEHIFPAKIPDNIYKMTLEHALKIHQFLGCKTISRSDFRYNPKNNTLKMLEINTHPGFTELSLVPEIAKLAKGINFNELVKIIIEDSLQHKNIRDLSHVEQYY.

One can recognise an ATP-grasp domain in the interval Lys103–Glu299. Residue Lys130–His183 coordinates ATP. Mg(2+) is bound by residues Asp251, Glu265, and Asn267.

It belongs to the D-alanine--D-alanine ligase family. The cofactor is Mg(2+). It depends on Mn(2+) as a cofactor.

It localises to the cytoplasm. The catalysed reaction is 2 D-alanine + ATP = D-alanyl-D-alanine + ADP + phosphate + H(+). The protein operates within cell wall biogenesis; peptidoglycan biosynthesis. Cell wall formation. This chain is D-alanine--D-alanine ligase, found in Wolbachia sp. subsp. Drosophila simulans (strain wRi).